A 505-amino-acid polypeptide reads, in one-letter code: ATP synthase subunit alpha (505 aa).

171–178 (GDRQTGKT) contacts ATP.

It belongs to the ATPase alpha/beta chains family. F-type ATPases have 2 components, CF(1) - the catalytic core - and CF(0) - the membrane proton channel. CF(1) has five subunits: alpha(3), beta(3), gamma(1), delta(1), epsilon(1). CF(0) has three main subunits: a(1), b(2) and c(9-12). The alpha and beta chains form an alternating ring which encloses part of the gamma chain. CF(1) is attached to CF(0) by a central stalk formed by the gamma and epsilon chains, while a peripheral stalk is formed by the delta and b chains.

The protein localises to the cell inner membrane. It carries out the reaction ATP + H2O + 4 H(+)(in) = ADP + phosphate + 5 H(+)(out). Produces ATP from ADP in the presence of a proton gradient across the membrane. The alpha chain is a regulatory subunit. This chain is ATP synthase subunit alpha, found in Campylobacter concisus (strain 13826).